The following is a 356-amino-acid chain: Phosphoribosylformylglycinamidine cyclo-ligase (356 aa).

This sequence belongs to the AIR synthase family.

It is found in the cytoplasm. It catalyses the reaction 2-formamido-N(1)-(5-O-phospho-beta-D-ribosyl)acetamidine + ATP = 5-amino-1-(5-phospho-beta-D-ribosyl)imidazole + ADP + phosphate + H(+). It functions in the pathway purine metabolism; IMP biosynthesis via de novo pathway; 5-amino-1-(5-phospho-D-ribosyl)imidazole from N(2)-formyl-N(1)-(5-phospho-D-ribosyl)glycinamide: step 2/2. The sequence is that of Phosphoribosylformylglycinamidine cyclo-ligase from Sinorhizobium fredii (strain NBRC 101917 / NGR234).